Here is an 856-residue protein sequence, read N- to C-terminus: Valine--tRNA ligase (856 aa).

Residues 47–57 (PTASGVLHIGH) carry the 'HIGH' region motif. The 'KMSKS' region motif lies at 578–582 (KMSKS). Residue lysine 581 coordinates ATP.

The protein belongs to the class-I aminoacyl-tRNA synthetase family. ValS type 2 subfamily. As to quaternary structure, monomer.

The protein resides in the cytoplasm. The enzyme catalyses tRNA(Val) + L-valine + ATP = L-valyl-tRNA(Val) + AMP + diphosphate. In terms of biological role, catalyzes the attachment of valine to tRNA(Val). As ValRS can inadvertently accommodate and process structurally similar amino acids such as threonine, to avoid such errors, it has a 'posttransfer' editing activity that hydrolyzes mischarged Thr-tRNA(Val) in a tRNA-dependent manner. This chain is Valine--tRNA ligase, found in Tropheryma whipplei (strain TW08/27) (Whipple's bacillus).